Here is a 379-residue protein sequence, read N- to C-terminus: Cobalt-precorrin-5B C(1)-methyltransferase (379 aa).

This sequence belongs to the CbiD family.

The catalysed reaction is Co-precorrin-5B + S-adenosyl-L-methionine = Co-precorrin-6A + S-adenosyl-L-homocysteine. It participates in cofactor biosynthesis; adenosylcobalamin biosynthesis; cob(II)yrinate a,c-diamide from sirohydrochlorin (anaerobic route): step 6/10. In terms of biological role, catalyzes the methylation of C-1 in cobalt-precorrin-5B to form cobalt-precorrin-6A. In Salmonella heidelberg (strain SL476), this protein is Cobalt-precorrin-5B C(1)-methyltransferase.